We begin with the raw amino-acid sequence, 489 residues long: UDP-N-acetylmuramoyl-L-alanyl-D-glutamate--2,6-diaminopimelate ligase (489 aa).

S30 provides a ligand contact to UDP-N-acetyl-alpha-D-muramoyl-L-alanyl-D-glutamate. G110–T116 provides a ligand contact to ATP. UDP-N-acetyl-alpha-D-muramoyl-L-alanyl-D-glutamate contacts are provided by residues T152–T153, S179, and R187. At K219 the chain carries N6-carboxylysine. Residues R381, D405 to R408, G458, and E462 contribute to the meso-2,6-diaminopimelate site. The Meso-diaminopimelate recognition motif motif lies at D405–R408.

The protein belongs to the MurCDEF family. MurE subfamily. Requires Mg(2+) as cofactor. Post-translationally, carboxylation is probably crucial for Mg(2+) binding and, consequently, for the gamma-phosphate positioning of ATP.

The protein resides in the cytoplasm. The enzyme catalyses UDP-N-acetyl-alpha-D-muramoyl-L-alanyl-D-glutamate + meso-2,6-diaminopimelate + ATP = UDP-N-acetyl-alpha-D-muramoyl-L-alanyl-gamma-D-glutamyl-meso-2,6-diaminopimelate + ADP + phosphate + H(+). It participates in cell wall biogenesis; peptidoglycan biosynthesis. In terms of biological role, catalyzes the addition of meso-diaminopimelic acid to the nucleotide precursor UDP-N-acetylmuramoyl-L-alanyl-D-glutamate (UMAG) in the biosynthesis of bacterial cell-wall peptidoglycan. The polypeptide is UDP-N-acetylmuramoyl-L-alanyl-D-glutamate--2,6-diaminopimelate ligase (Syntrophomonas wolfei subsp. wolfei (strain DSM 2245B / Goettingen)).